The sequence spans 438 residues: Ornithine aminotransferase car2 (438 aa).

Lys275 carries the post-translational modification N6-(pyridoxal phosphate)lysine.

It belongs to the class-III pyridoxal-phosphate-dependent aminotransferase family. Pyridoxal 5'-phosphate serves as cofactor.

Its subcellular location is the cytoplasm. The protein resides in the nucleus. The enzyme catalyses a 2-oxocarboxylate + L-ornithine = L-glutamate 5-semialdehyde + an L-alpha-amino acid. It participates in amino-acid biosynthesis; L-proline biosynthesis; L-glutamate 5-semialdehyde from L-ornithine: step 1/1. The protein is Ornithine aminotransferase car2 (car2) of Schizosaccharomyces pombe (strain 972 / ATCC 24843) (Fission yeast).